We begin with the raw amino-acid sequence, 648 residues long: Transketolase (648 aa).

A substrate-binding site is contributed by histidine 22. Thiamine diphosphate contacts are provided by residues histidine 62 and 109–111 (GPL). Aspartate 150 is a binding site for Mg(2+). 2 residues coordinate thiamine diphosphate: glycine 151 and asparagine 180. Residues asparagine 180 and valine 182 each coordinate Mg(2+). The substrate site is built by histidine 252, arginine 345, and serine 372. Histidine 252 contributes to the thiamine diphosphate binding site. Glutamate 397 acts as the Proton donor in catalysis. Phenylalanine 423 is a binding site for thiamine diphosphate. Substrate contacts are provided by histidine 447, aspartate 455, and arginine 506.

Belongs to the transketolase family. In terms of assembly, homodimer. Mg(2+) serves as cofactor. It depends on Ca(2+) as a cofactor. Requires Mn(2+) as cofactor. Co(2+) is required as a cofactor. The cofactor is thiamine diphosphate.

It catalyses the reaction D-sedoheptulose 7-phosphate + D-glyceraldehyde 3-phosphate = aldehydo-D-ribose 5-phosphate + D-xylulose 5-phosphate. In terms of biological role, catalyzes the transfer of a two-carbon ketol group from a ketose donor to an aldose acceptor, via a covalent intermediate with the cofactor thiamine pyrophosphate. The chain is Transketolase (tkt) from Mycoplasma genitalium (strain ATCC 33530 / DSM 19775 / NCTC 10195 / G37) (Mycoplasmoides genitalium).